A 302-amino-acid polypeptide reads, in one-letter code: 33 kDa chaperonin (302 aa).

Disulfide bonds link Cys247/Cys249 and Cys280/Cys283.

The protein belongs to the HSP33 family. Under oxidizing conditions two disulfide bonds are formed involving the reactive cysteines. Under reducing conditions zinc is bound to the reactive cysteines and the protein is inactive.

It is found in the cytoplasm. Its function is as follows. Redox regulated molecular chaperone. Protects both thermally unfolding and oxidatively damaged proteins from irreversible aggregation. Plays an important role in the bacterial defense system toward oxidative stress. The polypeptide is 33 kDa chaperonin (Prochlorococcus marinus (strain AS9601)).